A 284-amino-acid polypeptide reads, in one-letter code: Tripartite motif-containing protein 12A (284 aa).

The RING-type zinc-finger motif lies at 15–59 (CPVCLNLMVKPVSADCGHTFCQGCITLYFESIKCDKKVFICPVCR). A B box-type zinc finger spans residues 91–132 (QKVFNCARHGKKLQLFCRKDMMAICWLCERSQEHRGHKTALI). Residues C96, H99, C118, and H124 each coordinate Zn(2+). Residues 130–234 (ALIEEVAQEY…QSKLLEDFIS (105 aa)) adopt a coiled-coil conformation.

Belongs to the TRIM/RBCC family. Expressed in embryonic CNS, liver, kidney, olfactory epithelium.

It is found in the cytoplasm. This chain is Tripartite motif-containing protein 12A (Trim12a), found in Mus musculus (Mouse).